The following is a 110-amino-acid chain: UPF0060 membrane protein Rpic_4131 (110 aa).

Helical transmembrane passes span 8–28, 33–53, 65–85, and 88–108; these read VLFA…WLVL, PFWL…LLTL, YGGV…GVAL, and WDVG…LQPQ.

Belongs to the UPF0060 family.

Its subcellular location is the cell inner membrane. This Ralstonia pickettii (strain 12J) protein is UPF0060 membrane protein Rpic_4131.